Here is a 425-residue protein sequence, read N- to C-terminus: UDP-N-acetylglucosamine 1-carboxyvinyltransferase (425 aa).

25-26 contacts phosphoenolpyruvate; sequence KN. Residue R95 coordinates UDP-N-acetyl-alpha-D-glucosamine. The active-site Proton donor is the C119. A 2-(S-cysteinyl)pyruvic acid O-phosphothioketal modification is found at C119. UDP-N-acetyl-alpha-D-glucosamine is bound by residues 124–128, D306, and I328; that span reads RPVDQ.

Belongs to the EPSP synthase family. MurA subfamily.

Its subcellular location is the cytoplasm. It catalyses the reaction phosphoenolpyruvate + UDP-N-acetyl-alpha-D-glucosamine = UDP-N-acetyl-3-O-(1-carboxyvinyl)-alpha-D-glucosamine + phosphate. It functions in the pathway cell wall biogenesis; peptidoglycan biosynthesis. Cell wall formation. Adds enolpyruvyl to UDP-N-acetylglucosamine. The chain is UDP-N-acetylglucosamine 1-carboxyvinyltransferase from Thermus thermophilus (strain ATCC BAA-163 / DSM 7039 / HB27).